We begin with the raw amino-acid sequence, 827 residues long: MRKKRVFEIAKELNMESKEVINRLKAIGVEVKSHMSTVENHHLNLLLKALNREKEEKEKKEQEKKQVEQKAEAQKLQSHPQRPKEQQQSKQGGQSRPREQRSDRPQGQRYAGNQRPEPRDKDKGRRPGEQRSFNQNRPRDDRRRFDKERGVQGPKPFGEKKERPPFPREKKKGVLPAIPKPEAPKGENKEPERRKGAPDKKREWEKALKKEEKVFALEEKKLNLKKEKKQEKQEKQEPVAAEPKAIVIPERMTVQEFAKIMGKSAAEVIKKLMSYGILATINQEIDADTATIIATDFGYEVTVEKEEKEDIWLLEETPDDPESLEPRPPIVTVMGHVDHGKTSLLDAIRQTNVTATEAGGITQHIGAYQVEHNGRKITFIDTPGHEAFTAMRARGAQVTDIAILVVAADDGVMPQTVEAINHAKAAGVPIIVAVNKIDKPNAQPDRVKQQLTEYGLIPEAWGGDTVFVEVSALKKIGIEELLEMILLVADLKELKANPNKPARGTVIEAKLDKGRGPVATVLVQSGTLNVGDVVVVGLTYGRVRALMDDKGRRVKKATPSMPVEVLGLNDVPSAGDILVVVDDEKTARTLAEKRQEQKREEELRASSKVSLEDLFKHIQEGKIKELNIVLKADVHGSVEAIKQSLSRLSTEEVKVNVIHSGVGAITETDIMLASASNAIVIGFNVRPDSNARKLAETEKIDVRVYRIIYELLDDIKAAMAGLLEPEQKEVVLGRAEVRKTFKASKVGTIAGLYVLEGKITRSAKVRVIRDGIVIHEGNVESLKRFKDDVREVAQGYECGLTIEKFNDIREGDIIEAFTIEEVKRTLE.

Positions 49-205 (ALNREKEEKE…GAPDKKREWE (157 aa)) are disordered. Basic and acidic residues-rich tracts occupy residues 50-73 (LNREKEEKEKKEQEKKQVEQKAEA), 96-106 (RPREQRSDRPQ), 116-129 (PEPRDKDKGRRPGE), 137-150 (RPRDDRRRFDKERG), 157-168 (FGEKKERPPFPR), and 182-205 (EAPKGENKEPERRKGAPDKKREWE). The region spanning 326-495 (PRPPIVTVMG…LLVADLKELK (170 aa)) is the tr-type G domain. Residues 335-342 (GHVDHGKT) form a G1 region. 335-342 (GHVDHGKT) contacts GTP. Residues 360 to 364 (GITQH) form a G2 region. A G3 region spans residues 381-384 (DTPG). Residues 381–385 (DTPGH) and 435–438 (NKID) each bind GTP. A G4 region spans residues 435–438 (NKID). The G5 stretch occupies residues 471 to 473 (SAL).

It belongs to the TRAFAC class translation factor GTPase superfamily. Classic translation factor GTPase family. IF-2 subfamily.

Its subcellular location is the cytoplasm. One of the essential components for the initiation of protein synthesis. Protects formylmethionyl-tRNA from spontaneous hydrolysis and promotes its binding to the 30S ribosomal subunits. Also involved in the hydrolysis of GTP during the formation of the 70S ribosomal complex. The protein is Translation initiation factor IF-2 of Carboxydothermus hydrogenoformans (strain ATCC BAA-161 / DSM 6008 / Z-2901).